We begin with the raw amino-acid sequence, 82 residues long: MPKVITISDDVYDKLSKLKKGRSFSETINELIEFYNKNRKGNKDVLLQMFGILNEEEATEMASETLNIRKSFRFRAVENGDT.

Belongs to the UPF0330 family.

Its function is as follows. Possibly the antitoxin component of a type II toxin-antitoxin (TA) system. The sequence is that of Putative antitoxin Saci_0468 from Sulfolobus acidocaldarius (strain ATCC 33909 / DSM 639 / JCM 8929 / NBRC 15157 / NCIMB 11770).